The following is a 123-amino-acid chain: Protein Wnt-7b (123 aa).

Ser1 carries O-palmitoleoyl serine; by PORCN lipidation. The disordered linker stretch occupies residues Val33–Thr61. A disulfide bridge links Cys89 with Cys104. N-linked (GlcNAc...) asparagine glycosylation occurs at Asn90.

The protein belongs to the Wnt family. Post-translationally, palmitoleoylation is required for efficient binding to frizzled receptors. Depalmitoleoylation leads to Wnt signaling pathway inhibition.

It localises to the secreted. The protein resides in the extracellular space. It is found in the extracellular matrix. In terms of biological role, ligand for members of the frizzled family of seven transmembrane receptors that functions in the canonical Wnt/beta-catenin signaling pathway. Required for normal fusion of the chorion and the allantois during placenta development. Required for central nervous system (CNS) angiogenesis and blood-brain barrier regulation. This is Protein Wnt-7b (WNT7B) from Anser caerulescens (Snow goose).